We begin with the raw amino-acid sequence, 249 residues long: ATP synthase subunit a, chloroplastic (249 aa).

The next 5 helical transmembrane spans lie at 40–60 (QVLITSWVVIAILLGSSVLAI), 97–117 (VPFIGTLFLFIFVSNWSGALL), 136–156 (INTTVALALLTSVAYFYAGLS), 201–221 (LVVVVLVSLVPLVVPIPVMFL), and 222–242 (GLFTSGIQALIFATLAAAYIG).

This sequence belongs to the ATPase A chain family. As to quaternary structure, F-type ATPases have 2 components, CF(1) - the catalytic core - and CF(0) - the membrane proton channel. CF(1) has five subunits: alpha(3), beta(3), gamma(1), delta(1), epsilon(1). CF(0) has four main subunits: a, b, b' and c.

It localises to the plastid. It is found in the chloroplast thylakoid membrane. Key component of the proton channel; it plays a direct role in the translocation of protons across the membrane. The sequence is that of ATP synthase subunit a, chloroplastic from Olimarabidopsis pumila (Dwarf rocket).